Reading from the N-terminus, the 150-residue chain is Large ribosomal subunit protein uL15 (150 aa).

The protein belongs to the universal ribosomal protein uL15 family. As to quaternary structure, part of the 50S ribosomal subunit.

In terms of biological role, binds to the 23S rRNA. The protein is Large ribosomal subunit protein uL15 of Rickettsia typhi (strain ATCC VR-144 / Wilmington).